The chain runs to 228 residues: Leucyl/phenylalanyl-tRNA--protein transferase (228 aa).

The protein belongs to the L/F-transferase family.

Its subcellular location is the cytoplasm. The enzyme catalyses N-terminal L-lysyl-[protein] + L-leucyl-tRNA(Leu) = N-terminal L-leucyl-L-lysyl-[protein] + tRNA(Leu) + H(+). It catalyses the reaction N-terminal L-arginyl-[protein] + L-leucyl-tRNA(Leu) = N-terminal L-leucyl-L-arginyl-[protein] + tRNA(Leu) + H(+). It carries out the reaction L-phenylalanyl-tRNA(Phe) + an N-terminal L-alpha-aminoacyl-[protein] = an N-terminal L-phenylalanyl-L-alpha-aminoacyl-[protein] + tRNA(Phe). Its function is as follows. Functions in the N-end rule pathway of protein degradation where it conjugates Leu, Phe and, less efficiently, Met from aminoacyl-tRNAs to the N-termini of proteins containing an N-terminal arginine or lysine. The polypeptide is Leucyl/phenylalanyl-tRNA--protein transferase (Sulfurimonas denitrificans (strain ATCC 33889 / DSM 1251) (Thiomicrospira denitrificans (strain ATCC 33889 / DSM 1251))).